The primary structure comprises 367 residues: Tape measure protein (367 aa).

This sequence belongs to the skunalikevirus tape measure protein family.

Its subcellular location is the virion. Tape measure protein. Serves as a base for tail tube protein polymerization and acts as a template for tail length determination. This Lactococcus lactis (Lactococcus lactis bacteriophage F4-1) protein is Tape measure protein.